A 938-amino-acid polypeptide reads, in one-letter code: AP-2 complex subunit alpha-2 (938 aa).

Residues 11–12 (RG), Lys43, Tyr53, and 57–61 (KYVCK) each bind a 1,2-diacyl-sn-glycero-3-phospho-(1D-myo-inositol-3,4,5-trisphosphate). Residues 615–681 (LKKKKGPSTV…TGPPPSSGGG (67 aa)) are disordered. Residues 646–667 (PASTSAASTPSPSADLLGLGAV) show a composition bias toward low complexity. Residues 668–677 (PPAPTGPPPS) show a composition bias toward pro residues.

Belongs to the adaptor complexes large subunit family. As to quaternary structure, adaptor protein complex 2 (AP-2) is a heterotetramer composed of two large adaptins (alpha-type subunit AP2A1 or AP2A2 and beta-type subunit AP2B1), a medium adaptin (mu-type subunit AP2M1) and a small adaptin (sigma-type subunit AP2S1). Interacts with clathrin. Binds EPN1, EPS15, AMPH, SNAP91 and BIN1. Interacts with HIP1. Interacts with DGKD. Interacts with DENND1A, DENND1B and DENND1C. Interacts with FCHO1 and DAB2. Interacts with ATAT1; this interaction is required for efficient alpha-tubulin acetylation by ATAT1. Interacts with KIAA1107. Together with AP2B1 and AP2M1, it interacts with ADAM10; this interaction facilitates ADAM10 endocytosis from the plasma membrane during long-term potentiation in hippocampal neurons. Interacts with CLN3 (via dileucine motif). Interacts with ABCB11; this interaction regulates cell membrane expression of ABCB11 through its internalization in a clathrin-dependent manner and its subsequent degradation. Interacts with Cacfd1. Interacts with DNAJC6. In terms of tissue distribution, widely expressed.

The protein localises to the cell membrane. The protein resides in the membrane. Its subcellular location is the coated pit. Its function is as follows. Component of the adaptor protein complex 2 (AP-2). Adaptor protein complexes function in protein transport via transport vesicles in different membrane traffic pathways. Adaptor protein complexes are vesicle coat components and appear to be involved in cargo selection and vesicle formation. AP-2 is involved in clathrin-dependent endocytosis in which cargo proteins are incorporated into vesicles surrounded by clathrin (clathrin-coated vesicles, CCVs) which are destined for fusion with the early endosome. The clathrin lattice serves as a mechanical scaffold but is itself unable to bind directly to membrane components. Clathrin-associated adaptor protein (AP) complexes which can bind directly to both the clathrin lattice and to the lipid and protein components of membranes are considered to be the major clathrin adaptors contributing the CCV formation. AP-2 also serves as a cargo receptor to selectively sort the membrane proteins involved in receptor-mediated endocytosis. AP-2 seems to play a role in the recycling of synaptic vesicle membranes from the presynaptic surface. AP-2 recognizes Y-X-X-[FILMV] (Y-X-X-Phi) and [ED]-X-X-X-L-[LI] endocytosis signal motifs within the cytosolic tails of transmembrane cargo molecules. AP-2 may also play a role in maintaining normal post-endocytic trafficking through the ARF6-regulated, non-clathrin pathway. During long-term potentiation in hippocampal neurons, AP-2 is responsible for the endocytosis of ADAM10. The AP-2 alpha subunit binds polyphosphoinositide-containing lipids, positioning AP-2 on the membrane. The AP-2 alpha subunit acts via its C-terminal appendage domain as a scaffolding platform for endocytic accessory proteins. The AP-2 alpha and AP-2 sigma subunits are thought to contribute to the recognition of the [ED]-X-X-X-L-[LI] motif. The polypeptide is AP-2 complex subunit alpha-2 (Rattus norvegicus (Rat)).